The sequence spans 73 residues: UPF0235 protein SYO3AOP1_0257 (73 aa).

It belongs to the UPF0235 family.

The chain is UPF0235 protein SYO3AOP1_0257 from Sulfurihydrogenibium sp. (strain YO3AOP1).